We begin with the raw amino-acid sequence, 477 residues long: PTS system glucose-specific EIICB component (477 aa).

Over 1 to 14 the chain is Cytoplasmic; it reads MFKNAFANLQKVGK. The region spanning 1-388 is the PTS EIIC type-1 domain; the sequence is MFKNAFANLQ…LDLKTPGRED (388 aa). Residues 15-35 form a helical membrane-spanning segment; it reads SLMLPVSVLPIAGILLGVGSA. The Periplasmic portion of the chain corresponds to 36–50; it reads NFSWLPAVVSHVMAE. A helical transmembrane segment spans residues 51–71; it reads AGGSVFANMPLIFAIGVALGF. Topologically, residues 72-79 are cytoplasmic; that stretch reads TNNDGVSA. The chain crosses the membrane as a helical span at residues 80 to 100; that stretch reads LAAVVAYGIMVKTMAVVAPLV. Residues 101–111 are Periplasmic-facing; it reads LHLPAEEIASK. A helical membrane pass occupies residues 112–132; sequence HLADTGVLGGIISGAIAAYMF. Residues 133-151 lie on the Cytoplasmic side of the membrane; that stretch reads NRFYRIKLPEYLGFFAGKR. A helical transmembrane segment spans residues 152–172; the sequence is FVPIISGLAAIFTGVVLSFIW. Residues 173–190 lie on the Periplasmic side of the membrane; it reads PPIGSAIQTFSQWAAYQN. Residues 191 to 211 traverse the membrane as a helical segment; it reads PVVAFGIYGFIERCLVPFGLH. At 212 to 249 the chain is on the cytoplasmic side; the sequence is HIWNVPFQMQIGEYTNAAGQVFHGDIPRYMAGDPTAGK. A helical transmembrane segment spans residues 250-270; that stretch reads LSGGFLFKMYGLPAAAIAIWH. The Periplasmic segment spans residues 271-279; it reads SAKPENRAK. A helical membrane pass occupies residues 280-300; it reads VGGIMISAALTSFLTGITEPI. Residues 301-309 are Cytoplasmic-facing; it reads EFSFMFVAP. The helical transmembrane segment at 310 to 330 threads the bilayer; that stretch reads ILYIIHAILAGLAFPICILLG. At 331–355 the chain is on the periplasmic side; it reads MRDGTSFSHGLIDFIVLSGNSSKLW. The chain crosses the membrane as a helical span at residues 356–376; that stretch reads LFPIVGIGYAIVYYTIFRVLI. Topologically, residues 377-477 are cytoplasmic; it reads KALDLKTPGR…TEMDEYIRNH (101 aa). The PTS EIIB type-1 domain maps to 399 to 477; the sequence is SEMAPALVAA…TEMDEYIRNH (79 aa). The Phosphocysteinsyse intermediate; for EIIB activity role is filled by cysteine 421. Phosphocysteine is present on cysteine 421.

The protein localises to the cell inner membrane. The catalysed reaction is N(pros)-phospho-L-histidyl-[protein] + D-glucose(out) = D-glucose 6-phosphate(in) + L-histidyl-[protein]. In terms of biological role, the phosphoenolpyruvate-dependent sugar phosphotransferase system (sugar PTS), a major carbohydrate active transport system, catalyzes the phosphorylation of incoming sugar substrates concomitantly with their translocation across the cell membrane. The enzyme II complex composed of PtsG and Crr is involved in glucose transport. Also functions as a chemoreceptor monitoring the environment for changes in sugar concentration. In Escherichia coli O6:H1 (strain CFT073 / ATCC 700928 / UPEC), this protein is PTS system glucose-specific EIICB component (ptsG).